Reading from the N-terminus, the 304-residue chain is Calcium release-activated calcium channel protein 1 (304 aa).

Residues 1–11 (MHPEPAPPPNN) show a composition bias toward pro residues. The disordered stretch occupies residues 1 to 49 (MHPEPAPPPNNSNPELPLSGGSSTSGSRRSRRRSGDGEPTGAPPLPPPP). Residues 1–88 (MHPEPAPPPN…KLYLSRAKLK (88 aa)) are Cytoplasmic-facing. A required for generation of inwardly rectifying CRAC currents region spans residues 3 to 49 (PEPAPPPNNSNPELPLSGGSSTSGSRRSRRRSGDGEPTGAPPLPPPP). Residues 12–27 (SNPELPLSGGSSTSGS) are compositionally biased toward low complexity. Residues 39–60 (PTGAPPLPPPPAVSYPDWIGQS) are AKAP5 association region. The tract at residues 71 to 91 (SMQALSWRKLYLSRAKLKASS) is interaction with STIM1. A helical membrane pass occupies residues 89 to 106 (ASSRTSALLSGFAMVAMV). The Extracellular segment spans residues 107–120 (EVQLDTDHDYPPGL). Residues 121-141 (LIVFSACTTVLVAVHLFALMI) form a helical membrane-spanning segment. The Cytoplasmic portion of the chain corresponds to 142 to 174 (STCILPNIEAVSNVHNLNSVKESPHERMHRHIE). The helical transmembrane segment at 175–195 (LAWAFSTVIGTLLFLAEVVLL) threads the bilayer. Residues 196–237 (CWVKFLPLKRQAGQPSPTKPPTEPAVVVANSSNNGGITPGEA) lie on the Extracellular side of the membrane. A glycan (N-linked (GlcNAc...) asparagine) is linked at Asn-225. The helical transmembrane segment at 238-258 (AAIASTAIMVPCGLVFIVFAV) threads the bilayer. Over 259–304 (HFYRSLVSHKTDRQFQELNELAEFARLQDQLDHRGDHSLTPGTHYA) the chain is Cytoplasmic. An interaction with STIM1 region spans residues 275-295 (ELNELAEFARLQDQLDHRGDH). Residue Thr-298 is modified to Phosphothreonine.

It belongs to the Orai family. As to quaternary structure, oligomerizes in homomeric and heteromeric ORAI complexes. Native CRAC channels most likely consist of hexameric ORAI heteromers, implying that diverse ORAI1, ORAI2 and ORAI3 subunit combinations with distinct biophysical properties can operate in a cell-type specific way. ARC channels are heteropentamers consisting of three ORAI1 and two ORAI3 subunits. Interacts with STIM1 and STIM2; this regulates channel activity. Interacts with CALM; this may displace STIM1 and STIM2 and might thereby modulate channel activity. Interacts (via N-terminus) with AKAP5 upon store depletion. Interacts with CRACR2A/EFCAB4B; the interaction is direct and takes place in absence of Ca(2+). Forms a complex with CRACR2A/EFCAB4B and STIM1 at low concentration of Ca(2+), the complex dissociates at elevated Ca(2+) concentrations. Interacts with ASPH (isoform 8). Interacts with SLC35G1. Interacts with UBQLN1. Interacts with ADCY8; interaction is calcium store depletion independent; interaction occurs in membrane raft; interaction increases markedly after store depletion; positively regulates SOCE-induced adenylate cyclase activity; contributes to the targeting of ADCY8 to discrete regions of the plasma membrane that are shielded from other calcium events. Interacts with EFHB; the interaction takes place upon Ca(2+)-store depletion. Interacts (via N- and C-termini) with ATP2C2 (via N-terminus); this interaction regulates Ca(2+) influx at the plasma membrane. Interacts with TSPAN18; this interaction regulates ORAI1 exit from the endoplasmic (ER), and/or Golgi, and trafficking to the cell surface. N-glycosylated. N-glycosylation inhibits channel activity in T cells. In terms of processing, ubiquitinated. Post-translationally, cys-195 is oxidated, leading to inactivation of channel activity.

The protein resides in the cell membrane. It localises to the basolateral cell membrane. It carries out the reaction Ca(2+)(in) = Ca(2+)(out). With respect to regulation, oxidation at Cys-196 leads to inactivation of channel activity. Its function is as follows. Pore-forming subunit of two major inward rectifying Ca(2+) channels at the plasma membrane: Ca(2+) release-activated Ca(2+) (CRAC) channels and arachidonate-regulated Ca(2+)-selective (ARC) channels. Assembles with ORAI2 and ORAI3 to form hexameric CRAC channels that mediate Ca(2+) influx upon depletion of endoplasmic reticulum Ca(2+) store and channel activation by Ca(2+) sensor STIM1, a process known as store-operated Ca(2+) entry (SOCE). Various pore subunit combinations may account for distinct CRAC channel spatiotemporal and cell-type specific dynamics. ORAI1 mainly contributes to the generation of Ca(2+) plateaus involved in sustained Ca(2+) entry and is dispensable for cytosolic Ca(2+) oscillations, whereas ORAI2 and ORAI3 generate oscillatory patterns. CRAC channels assemble in Ca(2+) signaling microdomains where Ca(2+) influx is coupled to calmodulin and calcineurin signaling and activation of NFAT transcription factors recruited to ORAI1 via AKAP5. Activates NFATC2/NFAT1 and NFATC3/NFAT4-mediated transcriptional responses. CRAC channels are the main pathway for Ca(2+) influx in T cells and promote the immune response to pathogens by activating NFAT-dependent cytokine and chemokine transcription. Assembles with ORAI3 to form channels that mediate store-independent Ca(2+) influx in response to inflammatory metabolites arachidonate or its derivative leukotriene C4, termed ARC and LRC channels respectively. Plays a prominent role in Ca(2+) influx at the basolateral membrane of mammary epithelial cells independently of the Ca(2+) content of endoplasmic reticulum or Golgi stores. May mediate transepithelial transport of large quantities of Ca(2+) for milk secretion. The protein is Calcium release-activated calcium channel protein 1 (Orai1) of Rattus norvegicus (Rat).